The chain runs to 198 residues: Peptide methionine sulfoxide reductase MsrA 2 (198 aa).

Cysteine 32 is a catalytic residue.

It belongs to the MsrA Met sulfoxide reductase family.

It carries out the reaction L-methionyl-[protein] + [thioredoxin]-disulfide + H2O = L-methionyl-(S)-S-oxide-[protein] + [thioredoxin]-dithiol. The enzyme catalyses [thioredoxin]-disulfide + L-methionine + H2O = L-methionine (S)-S-oxide + [thioredoxin]-dithiol. Its function is as follows. Has an important function as a repair enzyme for proteins that have been inactivated by oxidation. Catalyzes the reversible oxidation-reduction of methionine sulfoxide in proteins to methionine. The sequence is that of Peptide methionine sulfoxide reductase MsrA 2 (msrA2) from Rhizobium meliloti (strain 1021) (Ensifer meliloti).